The primary structure comprises 278 residues: Dermonecrotic toxin LbSicTox-betaIA1a (278 aa).

His-12 is an active-site residue. Residues Glu-32 and Asp-34 each coordinate Mg(2+). His-48 (nucleophile) is an active-site residue. Cystine bridges form between Cys-52–Cys-58 and Cys-54–Cys-197. Residue Asp-92 coordinates Mg(2+). An N-linked (GlcNAc...) asparagine glycan is attached at Asn-258.

It belongs to the arthropod phospholipase D family. Class II subfamily. Class IIb sub-subfamily. Expressed by the venom gland.

The protein localises to the secreted. It catalyses the reaction an N-(acyl)-sphingosylphosphoethanolamine = an N-(acyl)-sphingosyl-1,3-cyclic phosphate + ethanolamine. It carries out the reaction a 1-acyl-sn-glycero-3-phosphocholine = a 1-acyl-sn-glycero-2,3-cyclic phosphate + choline. The catalysed reaction is a 1-acyl-sn-glycero-3-phosphoethanolamine = a 1-acyl-sn-glycero-2,3-cyclic phosphate + ethanolamine. In terms of biological role, this toxin does not show activity on sphingomyelin (SM) and does not show dermonecrotic activities. This toxin is a member of dermonecrotic toxins that cleave the phosphodiester linkage between the phosphate and headgroup of certain phospholipids (sphingolipid and lysolipid substrates), forming an alcohol (often choline) and a cyclic phosphate. It may act on ceramide phosphoethanolamine (CPE), lysophosphatidylcholine (LPC) and lysophosphatidylethanolamine (LPE), but not on lysophosphatidylserine (LPS), and lysophosphatidylglycerol (LPG). It may act by transphosphatidylation, releasing exclusively cyclic phosphate products as second products. The chain is Dermonecrotic toxin LbSicTox-betaIA1a from Loxosceles boneti (North American fiddleback spider).